The primary structure comprises 288 residues: Allergen Asp f 7 homolog (288 aa).

A signal peptide spans 1–20; the sequence is MAPQFLKALTVATALGATLA. 2 stretches are compositionally biased toward low complexity: residues 48–107 and 117–129; these read TVHG…SSSV and TTST…TTST. Residues 48–161 are disordered; sequence TVHGTPGPDY…PPVVSIPPIG (114 aa). Positions 130-151 are enriched in pro residues; the sequence is TPPPPPPAMTTPPPPPPPPATK. Asparagine 268 carries N-linked (GlcNAc...) asparagine glycosylation.

The protein localises to the secreted. This Arthroderma benhamiae (strain ATCC MYA-4681 / CBS 112371) (Trichophyton mentagrophytes) protein is Allergen Asp f 7 homolog.